A 205-amino-acid polypeptide reads, in one-letter code: dTTP/UTP pyrophosphatase (205 aa).

Asp81 (proton acceptor) is an active-site residue.

The protein belongs to the Maf family. YhdE subfamily. Requires a divalent metal cation as cofactor.

The protein resides in the cytoplasm. It catalyses the reaction dTTP + H2O = dTMP + diphosphate + H(+). It carries out the reaction UTP + H2O = UMP + diphosphate + H(+). Its function is as follows. Nucleoside triphosphate pyrophosphatase that hydrolyzes dTTP and UTP. May have a dual role in cell division arrest and in preventing the incorporation of modified nucleotides into cellular nucleic acids. This is dTTP/UTP pyrophosphatase from Agathobacter rectalis (strain ATCC 33656 / DSM 3377 / JCM 17463 / KCTC 5835 / VPI 0990) (Eubacterium rectale).